The chain runs to 375 residues: Succinyl-diaminopimelate desuccinylase (375 aa).

H66 lines the Zn(2+) pocket. The active site involves D68. D99 contributes to the Zn(2+) binding site. The active-site Proton acceptor is the E133. The Zn(2+) site is built by E134, E162, and H348.

Belongs to the peptidase M20A family. DapE subfamily. Homodimer. Requires Zn(2+) as cofactor. Co(2+) serves as cofactor.

The catalysed reaction is N-succinyl-(2S,6S)-2,6-diaminopimelate + H2O = (2S,6S)-2,6-diaminopimelate + succinate. It participates in amino-acid biosynthesis; L-lysine biosynthesis via DAP pathway; LL-2,6-diaminopimelate from (S)-tetrahydrodipicolinate (succinylase route): step 3/3. In terms of biological role, catalyzes the hydrolysis of N-succinyl-L,L-diaminopimelic acid (SDAP), forming succinate and LL-2,6-diaminopimelate (DAP), an intermediate involved in the bacterial biosynthesis of lysine and meso-diaminopimelic acid, an essential component of bacterial cell walls. In Herminiimonas arsenicoxydans, this protein is Succinyl-diaminopimelate desuccinylase.